The following is a 107-amino-acid chain: Iron-sulfur cluster assembly protein CyaY (107 aa).

This sequence belongs to the frataxin family.

In terms of biological role, involved in iron-sulfur (Fe-S) cluster assembly. May act as a regulator of Fe-S biogenesis. This chain is Iron-sulfur cluster assembly protein CyaY, found in Yersinia pseudotuberculosis serotype O:1b (strain IP 31758).